The primary structure comprises 261 residues: Undecaprenyl-diphosphatase 2 (261 aa).

A run of 8 helical transmembrane segments spans residues 1 to 21 (MLEALLLGVVEGLTEFLPISS), 38 to 58 (PGKTYEIVVQLGAILAVCVVF), 75 to 95 (FAFARNVMVAFLPAAVIGATL), 103 to 123 (LESPLVAAIALVVGGVAILVI), 138 to 158 (MSPALALGVGFCQVLAMVPGV), 178 to 198 (AAEFSFFLAIPTMCGASAYSL), 212 to 232 (LIALGFVAAFLSALVVVKGFI), and 240 to 260 (FAPFAWYRIAFGSLMAVLILM).

This sequence belongs to the UppP family.

Its subcellular location is the cell inner membrane. It carries out the reaction di-trans,octa-cis-undecaprenyl diphosphate + H2O = di-trans,octa-cis-undecaprenyl phosphate + phosphate + H(+). Its function is as follows. Catalyzes the dephosphorylation of undecaprenyl diphosphate (UPP). Confers resistance to bacitracin. The chain is Undecaprenyl-diphosphatase 2 from Paramagnetospirillum magneticum (strain ATCC 700264 / AMB-1) (Magnetospirillum magneticum).